A 145-amino-acid polypeptide reads, in one-letter code: 3-hydroxyacyl-[acyl-carrier-protein] dehydratase FabZ (145 aa).

Histidine 49 is a catalytic residue.

The protein belongs to the thioester dehydratase family. FabZ subfamily.

The protein localises to the cytoplasm. The catalysed reaction is a (3R)-hydroxyacyl-[ACP] = a (2E)-enoyl-[ACP] + H2O. Functionally, involved in unsaturated fatty acids biosynthesis. Catalyzes the dehydration of short chain beta-hydroxyacyl-ACPs and long chain saturated and unsaturated beta-hydroxyacyl-ACPs. The protein is 3-hydroxyacyl-[acyl-carrier-protein] dehydratase FabZ of Rickettsia akari (strain Hartford).